We begin with the raw amino-acid sequence, 454 residues long: VIGIVSLMLQIGNIISIWVSHSIQTGNQHQAEPCIQSIITYENNTWVNQTYVNISNTNFLTEKTVASVTLAGNSSLCPISGWAVYSKDNGIRIGSKGDVFVIREPFISCSHLECRTFFLTQGALLNDKHSNGTVKDRSPHRTLMSCPVGEAPSPYNSRFESVAWSASACHDGTNWLTIGISGPDNGAVAVLKYNGIITDTIKSWRNNILRTQESECACVNGSCFTVMTDGPSNGQASYKIFRIEKGKVVKSVELNAPNYHYEECSCYPDAGEITCVCRDNWHGSNRPWVSFNQNLEYQIGYICSGIFGDNPRPNDGTGSCGPVSSNGAYGIKGFSYKYGNGVWIGRTKSTNSRSGFEMIWDPNGWTGTDSNFSVKQDIVAITDWSGYSGSFVQHPELTGLDCIRPCFWVELIRGRPKESTIWTSGSSISFCGVNSDTVGWSWPDGAELPFTIDK.

A helical membrane pass occupies residues 1-13 (VIGIVSLMLQIGN). At 14-454 (IISIWVSHSI…GAELPFTIDK (441 aa)) the chain is on the virion surface side. Residues 21–75 (HSIQTGNQHQAEPCIQSIITYENNTWVNQTYVNISNTNFLTEKTVASVTLAGNSS) form a hypervariable stalk region region. N-linked (GlcNAc...) asparagine; by host glycans are attached at residues Asn43, Asn48, Asn53, and Asn73. Residues 76 to 454 (LCPISGWAVY…GAELPFTIDK (379 aa)) are head of neuraminidase. 8 disulfides stabilise this stretch: Cys77/Cys402, Cys109/Cys114, Cys169/Cys216, Cys218/Cys223, Cys264/Cys277, Cys266/Cys275, Cys303/Cys320, and Cys406/Cys431. Arg103 contacts substrate. N-linked (GlcNAc...) asparagine; by host glycosylation is present at Asn131. Catalysis depends on Asp136, which acts as the Proton donor/acceptor. Arg137 is a substrate binding site. Asn220 carries N-linked (GlcNAc...) asparagine; by host glycosylation. Residue 262 to 263 (EE) coordinates substrate. Arg278 contacts substrate. Ca(2+)-binding residues include Asp279, Gly283, and Asp309. Arg353 contacts substrate. Residue Asn371 is glycosylated (N-linked (GlcNAc...) asparagine; by host). The active-site Nucleophile is the Tyr387.

This sequence belongs to the glycosyl hydrolase 34 family. In terms of assembly, homotetramer. Ca(2+) serves as cofactor. Post-translationally, N-glycosylated.

The protein resides in the virion membrane. Its subcellular location is the host apical cell membrane. It catalyses the reaction Hydrolysis of alpha-(2-&gt;3)-, alpha-(2-&gt;6)-, alpha-(2-&gt;8)- glycosidic linkages of terminal sialic acid residues in oligosaccharides, glycoproteins, glycolipids, colominic acid and synthetic substrates.. Inhibited by the neuraminidase inhibitors zanamivir (Relenza) and oseltamivir (Tamiflu). These drugs interfere with the release of progeny virus from infected cells and are effective against all influenza strains. Resistance to neuraminidase inhibitors is quite rare. In terms of biological role, catalyzes the removal of terminal sialic acid residues from viral and cellular glycoconjugates. Cleaves off the terminal sialic acids on the glycosylated HA during virus budding to facilitate virus release. Additionally helps virus spread through the circulation by further removing sialic acids from the cell surface. These cleavages prevent self-aggregation and ensure the efficient spread of the progeny virus from cell to cell. Otherwise, infection would be limited to one round of replication. Described as a receptor-destroying enzyme because it cleaves a terminal sialic acid from the cellular receptors. May facilitate viral invasion of the upper airways by cleaving the sialic acid moieties on the mucin of the airway epithelial cells. Likely to plays a role in the budding process through its association with lipid rafts during intracellular transport. May additionally display a raft-association independent effect on budding. Plays a role in the determination of host range restriction on replication and virulence. Sialidase activity in late endosome/lysosome traffic seems to enhance virus replication. The chain is Neuraminidase from Influenza A virus (strain A/Teal/China/2978.1/2002 H5N1 genotype W).